The primary structure comprises 155 residues: Transcription antitermination protein NusB (155 aa).

It belongs to the NusB family.

Involved in transcription antitermination. Required for transcription of ribosomal RNA (rRNA) genes. Binds specifically to the boxA antiterminator sequence of the ribosomal RNA (rrn) operons. The sequence is that of Transcription antitermination protein NusB from Mesorhizobium japonicum (strain LMG 29417 / CECT 9101 / MAFF 303099) (Mesorhizobium loti (strain MAFF 303099)).